Consider the following 198-residue polypeptide: Recombination protein RecR (198 aa).

Residues cysteine 57–cysteine 72 form a C4-type zinc finger. Positions threonine 80–alanine 175 constitute a Toprim domain.

Belongs to the RecR family.

May play a role in DNA repair. It seems to be involved in an RecBC-independent recombinational process of DNA repair. It may act with RecF and RecO. In Lactococcus lactis subsp. lactis (strain IL1403) (Streptococcus lactis), this protein is Recombination protein RecR.